Here is a 243-residue protein sequence, read N- to C-terminus: Vimentin A2 (243 aa).

The segment at 1–22 (GFSLQDELDFLKKLHDEELADV) is coil 1B. Residues 1–188 (GFSLQDELDF…KLLEGEESRI (188 aa)) enclose the IF rod domain. A linker 12 region spans residues 23-45 (QAQIQDQQVQVDMDMAKPDLTAA). The coil 2 stretch occupies residues 46-184 (LRDVRLQYEN…ATYRKLLEGE (139 aa)). The interval 185-243 (ESRITTPLPNLSSFNLRDAILETKPILENTFSKKVLIKTIETRDGEVINESTQNHDDLE) is tail.

The protein belongs to the intermediate filament family. In terms of assembly, homomer. Post-translationally, one of the most prominent phosphoproteins in various cells of mesenchymal origin. Phosphorylation is enhanced during cell division, at which time vimentin filaments are significantly reorganized. Expressed in low amounts in retina, optic nerve, and brain and in higher amounts in spinal cord.

In terms of biological role, vimentins are class-III intermediate filaments found in various non-epithelial cells, especially mesenchymal cells. Vimentin is attached to the nucleus, endoplasmic reticulum, and mitochondria, either laterally or terminally. This is Vimentin A2 from Carassius auratus (Goldfish).